A 201-amino-acid polypeptide reads, in one-letter code: Phosphatidylglycerophosphatase and protein-tyrosine phosphatase 1 (201 aa).

The transit peptide at 1–27 (MAATALLEAGLARVLFYPTLLYTLFRG) directs the protein to the mitochondrion. In terms of domain architecture, Tyrosine-protein phosphatase spans 37–188 (WYHRIDPTVL…LKEFHKQITA (152 aa)). The Phosphocysteine intermediate role is filled by C132.

Belongs to the protein-tyrosine phosphatase family. Non-receptor class dual specificity subfamily. As to quaternary structure, interacts with STYXL1; the interaction inhibits PTPMT1 catalytic activity.

The protein resides in the mitochondrion inner membrane. The catalysed reaction is a 1,2-diacyl-sn-glycero-3-phospho-(1'-sn-glycero-3'-phosphate) + H2O = a 1,2-diacyl-sn-glycero-3-phospho-(1'-sn-glycerol) + phosphate. It carries out the reaction O-phospho-L-tyrosyl-[protein] + H2O = L-tyrosyl-[protein] + phosphate. It catalyses the reaction O-phospho-L-seryl-[protein] + H2O = L-seryl-[protein] + phosphate. The enzyme catalyses O-phospho-L-threonyl-[protein] + H2O = L-threonyl-[protein] + phosphate. The catalysed reaction is 1,2-di-(9Z-octadecenoyl)-sn-glycero-3-phospho-(1'-sn-glycerol-3'-phosphate) + H2O = 1,2-di-(9Z-octadecenoyl)-sn-glycero-3-phospho-(1'-sn-glycerol) + phosphate. It carries out the reaction 1,2-dioctanoyl-sn-glycero-3-phospho-(1D-myo-inositol-5-phosphate) + H2O = 1,2-dioctanoyl-sn-glycero-3-phospho-(1D-myo-inositol) + phosphate. It catalyses the reaction a 1-acyl-2-hexanoyl-sn-glycero-3-phospho-(1D-myo-inositol-5-phosphate) + H2O = a 1-acyl-2-hexanoyl-sn-glycero-3-phospho-(1D-myo-inositol) + phosphate. The enzyme catalyses 1,2-dibutyryl-sn-glycero-3-phospho-(1D-myo-inositol-5-phosphate) + H2O = 1,2-dibutyryl-sn-glycero-3-phospho-(1D-myo-inositol) + phosphate. Its pathway is phospholipid metabolism; phosphatidylglycerol biosynthesis; phosphatidylglycerol from CDP-diacylglycerol: step 2/2. In terms of biological role, lipid phosphatase which dephosphorylates phosphatidylglycerophosphate (PGP) to phosphatidylglycerol (PG). PGP is an essential intermediate in the biosynthetic pathway of cardiolipin, a mitochondrial-specific phospholipid regulating the membrane integrity and activities of the organelle. Has also been shown to display phosphatase activity toward phosphoprotein substrates, specifically mediates dephosphorylation of mitochondrial proteins, thereby playing an essential role in ATP production. Has probably a preference for proteins phosphorylated on Ser and/or Thr residues compared to proteins phosphorylated on Tyr residues. Probably involved in regulation of insulin secretion in pancreatic beta cells. May prevent intrinsic apoptosis, probably by regulating mitochondrial membrane integrity. This is Phosphatidylglycerophosphatase and protein-tyrosine phosphatase 1 from Homo sapiens (Human).